A 293-amino-acid chain; its full sequence is ATP synthase gamma chain (293 aa).

This sequence belongs to the ATPase gamma chain family. F-type ATPases have 2 components, CF(1) - the catalytic core - and CF(0) - the membrane proton channel. CF(1) has five subunits: alpha(3), beta(3), gamma(1), delta(1), epsilon(1). CF(0) has three main subunits: a, b and c.

It is found in the cell membrane. Its function is as follows. Produces ATP from ADP in the presence of a proton gradient across the membrane. The gamma chain is believed to be important in regulating ATPase activity and the flow of protons through the CF(0) complex. The chain is ATP synthase gamma chain from Streptococcus sanguinis.